Reading from the N-terminus, the 571-residue chain is Proline--tRNA ligase (571 aa).

This sequence belongs to the class-II aminoacyl-tRNA synthetase family. ProS type 1 subfamily. As to quaternary structure, homodimer.

It localises to the cytoplasm. It catalyses the reaction tRNA(Pro) + L-proline + ATP = L-prolyl-tRNA(Pro) + AMP + diphosphate. Catalyzes the attachment of proline to tRNA(Pro) in a two-step reaction: proline is first activated by ATP to form Pro-AMP and then transferred to the acceptor end of tRNA(Pro). As ProRS can inadvertently accommodate and process non-cognate amino acids such as alanine and cysteine, to avoid such errors it has two additional distinct editing activities against alanine. One activity is designated as 'pretransfer' editing and involves the tRNA(Pro)-independent hydrolysis of activated Ala-AMP. The other activity is designated 'posttransfer' editing and involves deacylation of mischarged Ala-tRNA(Pro). The misacylated Cys-tRNA(Pro) is not edited by ProRS. The protein is Proline--tRNA ligase of Shewanella frigidimarina (strain NCIMB 400).